The chain runs to 99 residues: Protein S100-Z (99 aa).

2 EF-hand domains span residues 13–48 and 50–85; these read ITVF…FLMS and KDPM…LTVA. The Ca(2+) site is built by serine 20, glutamate 23, aspartate 25, lysine 28, glutamate 33, aspartate 63, asparagine 65, aspartate 67, glutamate 69, and glutamate 74.

It belongs to the S-100 family. In terms of assembly, homodimer. Homodimers may assemble into larger stable oligomers. In larva at 5 days post-fertilization, shows very restricted expression only in a few large cells of the olfactory placode. More widely expressed in the adult. Expressed at higher levels in gut than in spleen, head kidney and gill.

This Danio rerio (Zebrafish) protein is Protein S100-Z.